The sequence spans 93 residues: Small ribosomal subunit protein uS19c (93 aa).

The protein belongs to the universal ribosomal protein uS19 family.

Its subcellular location is the plastid. The protein resides in the chloroplast. Functionally, protein S19 forms a complex with S13 that binds strongly to the 16S ribosomal RNA. This Zygnema circumcarinatum (Green alga) protein is Small ribosomal subunit protein uS19c.